The following is a 227-amino-acid chain: LexA repressor (227 aa).

Positions 25–45 (FDEMKDALDLRSKSGIHRLIT) form a DNA-binding region, H-T-H motif. Active-site for autocatalytic cleavage activity residues include S148 and K186.

It belongs to the peptidase S24 family. As to quaternary structure, homodimer.

The enzyme catalyses Hydrolysis of Ala-|-Gly bond in repressor LexA.. Functionally, represses a number of genes involved in the response to DNA damage (SOS response), including recA and lexA. In the presence of single-stranded DNA, RecA interacts with LexA causing an autocatalytic cleavage which disrupts the DNA-binding part of LexA, leading to derepression of the SOS regulon and eventually DNA repair. This is LexA repressor from Cereibacter sphaeroides (strain ATCC 17029 / ATH 2.4.9) (Rhodobacter sphaeroides).